Consider the following 380-residue polypeptide: mRNA cap guanine-N(7) methyltransferase (380 aa).

One can recognise an mRNA cap 0 methyltransferase domain in the interval 24-333 (SRIFFMRNMN…MYLVFGFRKK (310 aa)). An mRNA-binding site is contributed by 33–34 (NN). S-adenosyl-L-methionine-binding residues include lysine 37, alanine 62, aspartate 84, aspartate 117, glutamine 139, and tyrosine 144. The disordered stretch occupies residues 336-380 (EAEKTEEEPATTKPVAESESEQKEVTESEEKEDQEDCEHQEAQTN).

It belongs to the class I-like SAM-binding methyltransferase superfamily. mRNA cap 0 methyltransferase family.

The protein localises to the nucleus. It carries out the reaction a 5'-end (5'-triphosphoguanosine)-ribonucleoside in mRNA + S-adenosyl-L-methionine = a 5'-end (N(7)-methyl 5'-triphosphoguanosine)-ribonucleoside in mRNA + S-adenosyl-L-homocysteine. MRNA-capping methyltransferase that methylates the N7 position of the added guanosine to the 5'-cap structure of mRNAs. Binds RNA containing 5'-terminal GpppC. The polypeptide is mRNA cap guanine-N(7) methyltransferase (tag-72) (Caenorhabditis elegans).